The chain runs to 258 residues: (S)-hydroxynitrile lyase (258 aa).

The AB hydrolase-1 domain maps to 5–242 (HFVLIHTICH…GGDHKLQLTK (238 aa)). 2-hydroxy-2-methylpropanenitrile contacts are provided by Thr-11 and Ser-80. Residues Thr-11, Ser-80, and Cys-81 each contribute to the acetone site. The Proton donor/acceptor role is filled by Ser-80. Catalysis depends on His-236, which acts as the Proton donor/acceptor.

This sequence belongs to the AB hydrolase superfamily. Hydroxynitrile lyase family. In terms of assembly, homotetramer.

It carries out the reaction a monosubstituted aliphatic (S)-hydroxynitrile = an aldehyde + hydrogen cyanide. The enzyme catalyses a disubstituted aliphatic (S)-hydroxynitrile = a ketone + hydrogen cyanide. The catalysed reaction is an aromatic (S)-hydroxynitrile = an aromatic aldehyde + hydrogen cyanide. It catalyses the reaction 2-hydroxy-2-methylpropanenitrile = acetone + hydrogen cyanide. It carries out the reaction butan-2-one + hydrogen cyanide = 2-hydroxy-2-methylbutanenitrile. The enzyme catalyses pentan-2-one + hydrogen cyanide = (2S)-2-hydroxy-2-methylpentanenitrile. The catalysed reaction is hexan-2-one + hydrogen cyanide = (2S)-2-hydroxy-2-methylhexanenitrile. It catalyses the reaction heptan-2-one + hydrogen cyanide = (2S)-2-hydroxy-2-methylheptanenitrile. It carries out the reaction 4-methylpentan-2-one + hydrogen cyanide = (2S)-2-hydroxy-2,4-dimethylpentanenitrile. The enzyme catalyses 3,3-dimethylbutan-2-one + hydrogen cyanide = (2S)-2-hydroxy-2-methyl-3,3-dimethylbutanenitrile. The catalysed reaction is acetophenone + hydrogen cyanide = (2S)-2-hydroxy-2-phenylpropanenitrile. It catalyses the reaction propanal + hydrogen cyanide = (2S)-2-hydroxybutanenitrile. It carries out the reaction pentanal + hydrogen cyanide = (2S)-2-hydroxyhexanenitrile. The enzyme catalyses 2-methylpropanal + hydrogen cyanide = (2S)-2-hydroxy-3-methylbutanenitrile. The catalysed reaction is 2,2-dimethylpropanal + hydrogen cyanide = (2S)-2-hydroxy-3,3-dimethylbutanenitrile. It catalyses the reaction acrolein + hydrogen cyanide = (2S)-2-hydroxybut-3-enenitrile. It carries out the reaction (2E)-but-2-enal + hydrogen cyanide = (2S,3E)-2-hydroxypent-3-enenitrile. The enzyme catalyses (E)-hex-2-enal + hydrogen cyanide = (2S,3E)-2-hydroxyhept-3-enenitrile. The catalysed reaction is cyclohexanecarbaldehyde + hydrogen cyanide = (2S)-2-cyclohexyl-2-hydroxyacetonitrile. It catalyses the reaction benzaldehyde + hydrogen cyanide = (S)-mandelonitrile. It carries out the reaction 4-methoxybenzaldehyde + hydrogen cyanide = (2S)-2-hydroxy-2-(4-methoxyphenyl)acetonitrile. The enzyme catalyses piperonal + hydrogen cyanide = (2S)-2-(2H-1,3-benzodioxol-5-yl)-2-hydroxyacetonitrile. The catalysed reaction is formylthiophene + hydrogen cyanide = (2R)-2-hydroxy-2-(thiophen-2-yl)acetonitrile. It catalyses the reaction 3-formylthiophene + hydrogen cyanide = (2S)-2-hydroxy-2-(thiophen-3-yl)acetonitrile. It carries out the reaction furan-3-carbaldehyde + hydrogen cyanide = (2S)-2-(furan-3-yl)-2-hydroxyacetonitrile. In terms of biological role, involved in cyanogenesis, the release of HCN from cyanogenic glycosides in injured tissues; the release of toxic HCN is believed to play a central role in the defense mechanism of plants against herbivores and microbial attack. Decomposes a variety of cyanohydrins (alpha-hydroxynitriles) into HCN and the corresponding aldehydes or ketones; two natural substrates are 2-hydroxy-2-methylpropanenitrile (acetone cyanohydrin) and 2-hydroxy-2-methylbutanenitrile (2-butanone cyanohydrin), but in vitro can also act on 2-hydroxy-2-methylpentanenitrile (2-pentanone cyanohydrin) and mandelonitrile. Is also able to catalyze the reverse reaction in vitro, leading to the stereospecific synthesis of aliphatic, aromatic, and heterocyclic cyanohydrins, important intermediates in the production of various agrochemicals or pharmaceuticals. This chain is (S)-hydroxynitrile lyase, found in Manihot esculenta (Cassava).